A 217-amino-acid polypeptide reads, in one-letter code: Uracil-DNA glycosylase (217 aa).

Asp-62 acts as the Proton acceptor in catalysis.

It belongs to the uracil-DNA glycosylase (UDG) superfamily. UNG family.

The protein resides in the cytoplasm. It carries out the reaction Hydrolyzes single-stranded DNA or mismatched double-stranded DNA and polynucleotides, releasing free uracil.. In terms of biological role, excises uracil residues from the DNA which can arise as a result of misincorporation of dUMP residues by DNA polymerase or due to deamination of cytosine. The sequence is that of Uracil-DNA glycosylase from Streptococcus suis (strain 98HAH33).